The following is a 218-amino-acid chain: Adenylate kinase (218 aa).

An ATP-binding site is contributed by 10-15; sequence GAGKGT. The NMP stretch occupies residues 30-59; sequence STGDMLRAAVKAGTPLGVEAKKIMDAGALV. Residues Thr-31, Arg-36, 57-59, 85-88, and Gln-92 each bind AMP; these read ALV and GFPR. The segment at 122-159 is LID; that stretch reads GRRSHTASGRTYHVKYNPPKVEGKDDVTGEPLIQREDD. ATP contacts are provided by residues Arg-123 and 132–133; that span reads TY. AMP is bound by residues Arg-156 and Arg-167. ATP is bound at residue Gly-203.

The protein belongs to the adenylate kinase family. In terms of assembly, monomer.

It is found in the cytoplasm. The catalysed reaction is AMP + ATP = 2 ADP. It participates in purine metabolism; AMP biosynthesis via salvage pathway; AMP from ADP: step 1/1. Functionally, catalyzes the reversible transfer of the terminal phosphate group between ATP and AMP. Plays an important role in cellular energy homeostasis and in adenine nucleotide metabolism. The polypeptide is Adenylate kinase (Polaromonas sp. (strain JS666 / ATCC BAA-500)).